We begin with the raw amino-acid sequence, 507 residues long: Probable Xaa-Pro aminopeptidase ARB_01886 (507 aa).

Asp275, Asp286, Glu434, and Glu478 together coordinate Mn(2+).

It belongs to the peptidase M24B family. Mn(2+) serves as cofactor.

It catalyses the reaction Release of any N-terminal amino acid, including proline, that is linked to proline, even from a dipeptide or tripeptide.. In terms of biological role, catalyzes the removal of a penultimate prolyl residue from the N-termini of peptides. The protein is Probable Xaa-Pro aminopeptidase ARB_01886 of Arthroderma benhamiae (strain ATCC MYA-4681 / CBS 112371) (Trichophyton mentagrophytes).